Consider the following 342-residue polypeptide: uncharacterized protein (342 aa).

In terms of domain architecture, Nudix hydrolase spans 155–309 (TYGIHINGYV…KPNCALVMVD (155 aa)).

This is an uncharacterized protein from Saccharomyces cerevisiae (strain ATCC 204508 / S288c) (Baker's yeast).